The chain runs to 85 residues: U4-theraphotoxin-Hhn1a (85 aa).

The signal sequence occupies residues 1 to 22; that stretch reads MKVTLIAILTCAAVLVLHTTAA. A propeptide spanning residues 23 to 48 is cleaved from the precursor; that stretch reads EELEAESQLMKVGMPDTELAAVDEER. Cystine bridges form between cysteine 52/cysteine 66, cysteine 56/cysteine 77, and cysteine 71/cysteine 82.

This sequence belongs to the neurotoxin 12 (Hwtx-2) family. 02 (Hwtx-2) subfamily. As to quaternary structure, monomer. Expressed by the venom gland.

The protein resides in the secreted. Neurotoxin active on both insects and mammals. The chain is U4-theraphotoxin-Hhn1a from Cyriopagopus hainanus (Chinese bird spider).